We begin with the raw amino-acid sequence, 449 residues long: Pectate lyase L (449 aa).

A signal peptide spans 1-26 (MFKRNDRSKNGFNALRLGVSFVLASS). Cys27 is lipidated: N-palmitoyl cysteine. Cys27 carries the S-diacylglycerol cysteine lipid modification. PbH1 repeat units follow at residues 158 to 179 (GDFW…IYIG), 180 to 202 (GSNN…QLGR), 213 to 242 (PANN…AAKL), 245 to 267 (GSGN…DLYS), 274 to 308 (IGAV…KLGG), 336 to 358 (PGTI…AFDK), and 359 to 391 (GEHV…WWKN). Ca(2+) is bound by residues Asp236, Asp260, Asp261, and Asp264. The Proton acceptor role is filled by Lys305.

It belongs to the polysaccharide lyase 9 family. Requires Ca(2+) as cofactor.

It localises to the secreted. It carries out the reaction Eliminative cleavage of (1-&gt;4)-alpha-D-galacturonan to give oligosaccharides with 4-deoxy-alpha-D-galact-4-enuronosyl groups at their non-reducing ends.. With respect to regulation, activated in presence of the surfactant polysorbate 20, while inhibited in the presence of polysorbate 40, polysorbate 60, polysorbate 80, Triton X-100 and sodium dodecyl sulfate. Inhibited by the metal chelator ethylenediaminetetraacetic acid (EDTA). Inhibited by iron and cobalt ions. Presents an endo-cleaving activity on the homogalacturonan (HG) region in pectin with a preference for low- or unmethylated pectin. The polypeptide is Pectate lyase L (Paenibacillus polymyxa (strain SC2) (Bacillus polymyxa)).